The primary structure comprises 244 residues: Glucosamine-6-phosphate deaminase (244 aa).

Aspartate 67 acts as the Proton acceptor; for enolization step in catalysis. The active-site For ring-opening step is the asparagine 136. The Proton acceptor; for ring-opening step role is filled by histidine 138. Glutamate 143 acts as the For ring-opening step in catalysis.

This sequence belongs to the glucosamine/galactosamine-6-phosphate isomerase family. NagB subfamily.

The enzyme catalyses alpha-D-glucosamine 6-phosphate + H2O = beta-D-fructose 6-phosphate + NH4(+). It participates in amino-sugar metabolism; N-acetylneuraminate degradation; D-fructose 6-phosphate from N-acetylneuraminate: step 5/5. Functionally, catalyzes the reversible isomerization-deamination of glucosamine 6-phosphate (GlcN6P) to form fructose 6-phosphate (Fru6P) and ammonium ion. The sequence is that of Glucosamine-6-phosphate deaminase from Clostridium botulinum (strain Okra / Type B1).